The primary structure comprises 280 residues: Formamidopyrimidine-DNA glycosylase (280 aa).

Pro2 acts as the Schiff-base intermediate with DNA in catalysis. The Proton donor role is filled by Glu3. Catalysis depends on Lys60, which acts as the Proton donor; for beta-elimination activity. Positions 93 and 112 each coordinate DNA. The FPG-type zinc finger occupies 240 to 274; it reads YVYGQHSKPCRVCGADIIKIKVGGRGTHLCPTCQP. The Proton donor; for delta-elimination activity role is filled by Arg264.

It belongs to the FPG family. As to quaternary structure, monomer. Zn(2+) is required as a cofactor.

It catalyses the reaction Hydrolysis of DNA containing ring-opened 7-methylguanine residues, releasing 2,6-diamino-4-hydroxy-5-(N-methyl)formamidopyrimidine.. The enzyme catalyses 2'-deoxyribonucleotide-(2'-deoxyribose 5'-phosphate)-2'-deoxyribonucleotide-DNA = a 3'-end 2'-deoxyribonucleotide-(2,3-dehydro-2,3-deoxyribose 5'-phosphate)-DNA + a 5'-end 5'-phospho-2'-deoxyribonucleoside-DNA + H(+). Involved in base excision repair of DNA damaged by oxidation or by mutagenic agents. Acts as a DNA glycosylase that recognizes and removes damaged bases. Has a preference for oxidized purines, such as 7,8-dihydro-8-oxoguanine (8-oxoG). Has AP (apurinic/apyrimidinic) lyase activity and introduces nicks in the DNA strand. Cleaves the DNA backbone by beta-delta elimination to generate a single-strand break at the site of the removed base with both 3'- and 5'-phosphates. This chain is Formamidopyrimidine-DNA glycosylase, found in Oceanobacillus iheyensis (strain DSM 14371 / CIP 107618 / JCM 11309 / KCTC 3954 / HTE831).